The primary structure comprises 101 residues: Urease subunit beta (101 aa).

Belongs to the urease beta subunit family. As to quaternary structure, heterotrimer of UreA (gamma), UreB (beta) and UreC (alpha) subunits. Three heterotrimers associate to form the active enzyme.

Its subcellular location is the cytoplasm. The catalysed reaction is urea + 2 H2O + H(+) = hydrogencarbonate + 2 NH4(+). It participates in nitrogen metabolism; urea degradation; CO(2) and NH(3) from urea (urease route): step 1/1. The chain is Urease subunit beta from Burkholderia pseudomallei (strain 668).